A 122-amino-acid polypeptide reads, in one-letter code: Large ribosomal subunit protein uL14 (122 aa).

This sequence belongs to the universal ribosomal protein uL14 family. In terms of assembly, part of the 50S ribosomal subunit. Forms a cluster with proteins L3 and L19. In the 70S ribosome, L14 and L19 interact and together make contacts with the 16S rRNA in bridges B5 and B8.

In terms of biological role, binds to 23S rRNA. Forms part of two intersubunit bridges in the 70S ribosome. The polypeptide is Large ribosomal subunit protein uL14 (Carsonella ruddii (strain PV)).